Here is a 539-residue protein sequence, read N- to C-terminus: Probable elastin-binding protein EbpS (539 aa).

Residues 1-14 (MSKNNFRDDFEKNR) are compositionally biased toward basic and acidic residues. The segment at 1 to 324 (MSKNNFRDDF…EDGNDGFQAH (324 aa)) is disordered. Acidic residues predominate over residues 21–34 (DQFEDNTNEFDENS). Residues 35-52 (NESNDFDNQSDQQFPPRN) show a composition bias toward low complexity. A compositionally biased stretch (basic residues) spans 53–69 (AQRRQRRRNQATNKNRK). The span at 70–81 (FGNQNSDSNANG) shows a compositional bias: polar residues. 3 stretches are compositionally biased toward basic and acidic residues: residues 100 to 176 (QENH…DQQN), 210 to 226 (EHHD…RDLN), and 233 to 259 (QNRK…EPKK). The span at 266–283 (AAVGAGAAGAAGAAGVAA) shows a compositional bias: low complexity. Residues 291–317 (KNNNHKDNHSHNRDHQDDHRNHKHEDG) are compositionally biased toward basic and acidic residues. The chain crosses the membrane as a helical span at residues 335–355 (ILLPLIALLLILAALAIFIGM). Composition is skewed to basic and acidic residues over residues 362 to 371 (KDSNQADNKT) and 378 to 417 (DNNK…KATT). The tract at residues 362-491 (KDSNQADNKT…NSSNSGQQTH (130 aa)) is disordered. Low complexity predominate over residues 418–490 (DNDSSNNSSD…SNSSNSGQQT (73 aa)). The LysM domain maps to 489-537 (QTHVVSGNENLYRIAIQYYGEGTVENVNKLKQANGLSSNNISNGQKLII).

The protein resides in the cell membrane. In Staphylococcus haemolyticus (strain JCSC1435), this protein is Probable elastin-binding protein EbpS (ebpS).